Consider the following 140-residue polypeptide: Endoribonuclease YbeY (140 aa).

Zn(2+) is bound by residues H100, H104, and H110.

Belongs to the endoribonuclease YbeY family. Zn(2+) is required as a cofactor.

It localises to the cytoplasm. Single strand-specific metallo-endoribonuclease involved in late-stage 70S ribosome quality control and in maturation of the 3' terminus of the 16S rRNA. The protein is Endoribonuclease YbeY of Helicobacter pylori (strain ATCC 700392 / 26695) (Campylobacter pylori).